Here is a 218-residue protein sequence, read N- to C-terminus: Small ribosomal subunit protein uS3 (218 aa).

The KH type-2 domain maps to 38–106 (IREYISKRLS…RVHINILEIK (69 aa)).

This sequence belongs to the universal ribosomal protein uS3 family. Part of the 30S ribosomal subunit. Forms a tight complex with proteins S10 and S14.

Functionally, binds the lower part of the 30S subunit head. Binds mRNA in the 70S ribosome, positioning it for translation. In Bacillus subtilis (strain 168), this protein is Small ribosomal subunit protein uS3.